The following is a 461-amino-acid chain: Fumarate hydratase class II (461 aa).

Residues 97 to 99 (SGT), 127 to 130 (HPND), 137 to 139 (SSN), and Thr185 each bind substrate. The active-site Proton donor/acceptor is the His186. Residue Ser316 is part of the active site. Substrate contacts are provided by residues Ser317 and 322–324 (KVN).

Belongs to the class-II fumarase/aspartase family. Fumarase subfamily. In terms of assembly, homotetramer.

The protein localises to the cytoplasm. The enzyme catalyses (S)-malate = fumarate + H2O. It participates in carbohydrate metabolism; tricarboxylic acid cycle; (S)-malate from fumarate: step 1/1. In terms of biological role, involved in the TCA cycle. Catalyzes the stereospecific interconversion of fumarate to L-malate. The sequence is that of Fumarate hydratase class II from Oceanobacillus iheyensis (strain DSM 14371 / CIP 107618 / JCM 11309 / KCTC 3954 / HTE831).